Here is a 203-residue protein sequence, read N- to C-terminus: Small ribosomal subunit protein uS4 (203 aa).

The region spanning Arg-93–Val-156 is the S4 RNA-binding domain.

This sequence belongs to the universal ribosomal protein uS4 family. Part of the 30S ribosomal subunit. Contacts protein S5. The interaction surface between S4 and S5 is involved in control of translational fidelity.

Functionally, one of the primary rRNA binding proteins, it binds directly to 16S rRNA where it nucleates assembly of the body of the 30S subunit. In terms of biological role, with S5 and S12 plays an important role in translational accuracy. The polypeptide is Small ribosomal subunit protein uS4 (Streptococcus pneumoniae serotype 2 (strain D39 / NCTC 7466)).